The following is a 146-amino-acid chain: Phospholipase A2, membrane associated (146 aa).

An N-terminal signal peptide occupies residues 1 to 21 (MKVLLLLAASIMAFGSIQVQG). Disulfide bonds link cysteine 47/cysteine 139, cysteine 49/cysteine 65, cysteine 64/cysteine 119, cysteine 70/cysteine 146, cysteine 71/cysteine 112, cysteine 80/cysteine 105, and cysteine 98/cysteine 110. Residues histidine 48, glycine 50, and glycine 52 each contribute to the Ca(2+) site. Histidine 68 is an active-site residue. Aspartate 69 serves as a coordination point for Ca(2+). The active site involves aspartate 113.

Belongs to the phospholipase A2 family. Requires Ca(2+) as cofactor. Mainly in the Paneth cells adjacent to the stem population in the small intestines.

The protein resides in the secreted. Its subcellular location is the cell membrane. It localises to the mitochondrion outer membrane. It carries out the reaction a 1,2-diacyl-sn-glycero-3-phosphoethanolamine + H2O = a 1-acyl-sn-glycero-3-phosphoethanolamine + a fatty acid + H(+). The catalysed reaction is 1-hexadecanoyl-2-(9Z-octadecenoyl)-sn-glycero-3-phosphoethanolamine + H2O = 1-hexadecanoyl-sn-glycero-3-phosphoethanolamine + (9Z)-octadecenoate + H(+). The enzyme catalyses 1-hexadecanoyl-2-(9Z,12Z-octadecadienoyl)-sn-glycero-3-phosphoethanolamine + H2O = 1-hexadecanoyl-sn-glycero-3-phosphoethanolamine + (9Z,12Z)-octadecadienoate + H(+). It catalyses the reaction 1-hexadecanoyl-2-(5Z,8Z,11Z,14Z-eicosatetraenoyl)-sn-glycero-3-phosphoethanolamine + H2O = 1-hexadecanoyl-sn-glycero-3-phosphoethanolamine + (5Z,8Z,11Z,14Z)-eicosatetraenoate + H(+). It carries out the reaction N-hexadecanoyl-1,2-di-(9Z-octadecenoyl)-sn-glycero-3-phosphoethanolamine + H2O = N-hexadecanoyl-1-(9Z-octadecenoyl)-sn-glycero-3-phosphoethanolamine + (9Z)-octadecenoate + H(+). The catalysed reaction is 1,2-dihexadecanoyl-sn-glycero-3-phospho-(1'-sn-glycerol) + H2O = 1-hexadecanoyl-sn-glycero-3-phospho-(1'-sn-glycerol) + hexadecanoate + H(+). The enzyme catalyses 1-hexadecanoyl-2-(9Z-octadecenoyl)-sn-glycero-3-phosphoglycerol + H2O = 1-hexadecanoyl-sn-glycero-3-phosphoglycerol + (9Z)-octadecenoate + H(+). It catalyses the reaction 1-hexadecanoyl-2-(9Z-octadecenoyl)-sn-glycero-3-phospho-(1'-sn-glycerol) + H2O = 1-hexadecanoyl-sn-glycero-3-phospho-(1'-sn-glycerol) + (9Z)-octadecenoate + H(+). It carries out the reaction a 1,2-diacyl-sn-glycero-3-phosphocholine + H2O = a 1-acyl-sn-glycero-3-phosphocholine + a fatty acid + H(+). The catalysed reaction is 1,2-dihexadecanoyl-sn-glycero-3-phosphocholine + H2O = 1-hexadecanoyl-sn-glycero-3-phosphocholine + hexadecanoate + H(+). The enzyme catalyses 1-hexadecanoyl-2-(9Z-octadecenoyl)-sn-glycero-3-phosphocholine + H2O = 1-hexadecanoyl-sn-glycero-3-phosphocholine + (9Z)-octadecenoate + H(+). It catalyses the reaction 1-hexadecanoyl-2-(9Z,12Z-octadecadienoyl)-sn-glycero-3-phosphocholine + H2O = (9Z,12Z)-octadecadienoate + 1-hexadecanoyl-sn-glycero-3-phosphocholine + H(+). It carries out the reaction 1-hexadecanoyl-2-(4Z,7Z,10Z,13Z,16Z,19Z-docosahexaenoyl)-sn-glycero-3-phosphocholine + H2O = (4Z,7Z,10Z,13Z,16Z,19Z)-docosahexaenoate + 1-hexadecanoyl-sn-glycero-3-phosphocholine + H(+). In terms of biological role, secretory calcium-dependent phospholipase A2 that primarily targets extracellular phospholipids with implications in host antimicrobial defense, inflammatory response and tissue regeneration. Hydrolyzes the ester bond of the fatty acyl group attached at sn-2 position of phospholipids (phospholipase A2 activity) with preference for phosphatidylethanolamines and phosphatidylglycerols over phosphatidylcholines. Contributes to lipid remodeling of cellular membranes and generation of lipid mediators involved in pathogen clearance. Displays bactericidal activity against Gram-positive bacteria by directly hydrolyzing phospholipids of the bacterial membrane. Upon sterile inflammation, targets membrane phospholipids of extracellular mitochondria released from activated platelets, generating free unsaturated fatty acids such as arachidonate that is used by neighboring leukocytes to synthesize inflammatory eicosanoids such as leukotrienes. Simultaneously, by compromising mitochondrial membrane integrity, promotes the release in circulation of potent damage-associated molecular pattern molecules that activate the innate immune response. Plays a stem cell regulator role in the intestinal crypt. Within intracellular compartment mediates Paneth cell differentiation and its stem cell supporting functions by inhibiting Wnt signaling pathway in intestinal stem cell (ICS). Secreted in the intestinal lumen upon inflammation, acts in an autocrine way and promotes prostaglandin E2 synthesis that stimulates Wnt signaling pathway in ICS cells and tissue regeneration. May play a role in the biosynthesis of N-acyl ethanolamines that regulate energy metabolism and inflammation. Hydrolyzes N-acyl phosphatidylethanolamines to N-acyl lysophosphatidylethanolamines, which are further cleaved by a lysophospholipase D to release N-acyl ethanolamines. Independent of its catalytic activity, acts as a ligand for integrins. Binds to and activates integrins ITGAV:ITGB3, ITGA4:ITGB1 and ITGA5:ITGB1. Binds to a site (site 2) which is distinct from the classical ligand-binding site (site 1) and induces integrin conformational changes and enhanced ligand binding to site 1. Induces cell proliferation in an integrin-dependent manner. The sequence is that of Phospholipase A2, membrane associated (Pla2g2a) from Mus musculus (Mouse).